Here is a 135-residue protein sequence, read N- to C-terminus: Large ribosomal subunit protein mL61 (135 aa).

Residues 114–129 (HHESSPENIKEAHKQD) are compositionally biased toward basic and acidic residues. The tract at residues 114–135 (HHESSPENIKEAHKQDYSPPSN) is disordered.

It belongs to the mitochondrion-specific ribosomal protein mL61 family. Component of the mitochondrial large ribosomal subunit (mt-LSU). Mature yeast 74S mitochondrial ribosomes consist of a small (37S) and a large (54S) subunit. The 37S small subunit contains a 15S ribosomal RNA (15S mt-rRNA) and at least 32 different proteins. The 54S large subunit contains a 21S rRNA (21S mt-rRNA) and at least 45 different proteins.

Its subcellular location is the mitochondrion. Component of the mitochondrial ribosome (mitoribosome), a dedicated translation machinery responsible for the synthesis of mitochondrial genome-encoded proteins, including at least some of the essential transmembrane subunits of the mitochondrial respiratory chain. The mitoribosomes are attached to the mitochondrial inner membrane and translation products are cotranslationally integrated into the membrane. mL61 is not essential in cells grown at 30 degrees Celsius but is required for mitochondrial translation in cells grown at 18 degrees Celsius. The sequence is that of Large ribosomal subunit protein mL61 (mrp49) from Schizosaccharomyces pombe (strain 972 / ATCC 24843) (Fission yeast).